The following is a 406-amino-acid chain: Imidazolonepropionase (406 aa).

Fe(3+)-binding residues include H72 and H74. Residues H72 and H74 each coordinate Zn(2+). R81, Y144, and H177 together coordinate 4-imidazolone-5-propanoate. Y144 provides a ligand contact to N-formimidoyl-L-glutamate. Residue H242 coordinates Fe(3+). H242 is a Zn(2+) binding site. Q245 provides a ligand contact to 4-imidazolone-5-propanoate. Fe(3+) is bound at residue D317. D317 lines the Zn(2+) pocket. N319 and G321 together coordinate N-formimidoyl-L-glutamate. A 4-imidazolone-5-propanoate-binding site is contributed by T322.

This sequence belongs to the metallo-dependent hydrolases superfamily. HutI family. Zn(2+) serves as cofactor. Fe(3+) is required as a cofactor.

It localises to the cytoplasm. The catalysed reaction is 4-imidazolone-5-propanoate + H2O = N-formimidoyl-L-glutamate. It functions in the pathway amino-acid degradation; L-histidine degradation into L-glutamate; N-formimidoyl-L-glutamate from L-histidine: step 3/3. Functionally, catalyzes the hydrolytic cleavage of the carbon-nitrogen bond in imidazolone-5-propanoate to yield N-formimidoyl-L-glutamate. It is the third step in the universal histidine degradation pathway. This is Imidazolonepropionase from Yersinia enterocolitica serotype O:8 / biotype 1B (strain NCTC 13174 / 8081).